A 267-amino-acid chain; its full sequence is Thymidylate synthase (267 aa).

Arginine 24 is a binding site for dUMP. Histidine 54 provides a ligand contact to (6R)-5,10-methylene-5,6,7,8-tetrahydrofolate. Position 129–130 (arginine 129–arginine 130) interacts with dUMP. Cysteine 149 serves as the catalytic Nucleophile. Residues arginine 169–aspartate 172, asparagine 180, and histidine 210–tyrosine 212 contribute to the dUMP site. Aspartate 172 contacts (6R)-5,10-methylene-5,6,7,8-tetrahydrofolate. Alanine 266 provides a ligand contact to (6R)-5,10-methylene-5,6,7,8-tetrahydrofolate.

It belongs to the thymidylate synthase family. Bacterial-type ThyA subfamily. As to quaternary structure, homodimer.

It localises to the cytoplasm. It catalyses the reaction dUMP + (6R)-5,10-methylene-5,6,7,8-tetrahydrofolate = 7,8-dihydrofolate + dTMP. It participates in pyrimidine metabolism; dTTP biosynthesis. Its function is as follows. Catalyzes the reductive methylation of 2'-deoxyuridine-5'-monophosphate (dUMP) to 2'-deoxythymidine-5'-monophosphate (dTMP) while utilizing 5,10-methylenetetrahydrofolate (mTHF) as the methyl donor and reductant in the reaction, yielding dihydrofolate (DHF) as a by-product. This enzymatic reaction provides an intracellular de novo source of dTMP, an essential precursor for DNA biosynthesis. This chain is Thymidylate synthase, found in Arthrobacter sp. (strain FB24).